Here is a 156-residue protein sequence, read N- to C-terminus: Single-stranded DNA-binding protein 1 (156 aa).

The 104-residue stretch at 1–104 (MLNRTILVGR…VVADSIQFLE (104 aa)) folds into the SSB domain. Residues 122-146 (QTRGQSQYSNNKPVKDNPFANANCP) are disordered.

In terms of assembly, homotetramer.

The protein is Single-stranded DNA-binding protein 1 (ssb1) of Staphylococcus aureus (strain MSSA476).